Reading from the N-terminus, the 212-residue chain is Pyridoxine/pyridoxamine 5'-phosphate oxidase (212 aa).

Residues 7–10 and Lys-66 each bind substrate; that span reads RREY. FMN is bound by residues 61-66, 76-77, Lys-83, and Gln-105; these read RIVLLK and YT. Positions 123, 127, and 131 each coordinate substrate. FMN contacts are provided by residues 140–141 and Trp-185; that span reads QS. 191–193 provides a ligand contact to substrate; it reads RLH. Position 195 (Arg-195) interacts with FMN.

It belongs to the pyridoxamine 5'-phosphate oxidase family. In terms of assembly, homodimer. Requires FMN as cofactor.

The catalysed reaction is pyridoxamine 5'-phosphate + O2 + H2O = pyridoxal 5'-phosphate + H2O2 + NH4(+). The enzyme catalyses pyridoxine 5'-phosphate + O2 = pyridoxal 5'-phosphate + H2O2. It functions in the pathway cofactor metabolism; pyridoxal 5'-phosphate salvage; pyridoxal 5'-phosphate from pyridoxamine 5'-phosphate: step 1/1. The protein operates within cofactor metabolism; pyridoxal 5'-phosphate salvage; pyridoxal 5'-phosphate from pyridoxine 5'-phosphate: step 1/1. In terms of biological role, catalyzes the oxidation of either pyridoxine 5'-phosphate (PNP) or pyridoxamine 5'-phosphate (PMP) into pyridoxal 5'-phosphate (PLP). This chain is Pyridoxine/pyridoxamine 5'-phosphate oxidase, found in Idiomarina loihiensis (strain ATCC BAA-735 / DSM 15497 / L2-TR).